The sequence spans 319 residues: Selection and upkeep of intraepithelial T-cells protein 9 (319 aa).

A signal peptide spans 1–26; sequence MESSASCLPGFFMSFLLLQNTVLTQA. Residues 27–117 enclose the Ig-like V-type domain; that stretch reads MRSDIKINIQ…TNQEKKRSIV (91 aa). Topologically, residues 27-139 are extracellular; sequence MRSDIKINIQ…LMSNKFSCPS (113 aa). Cysteine 47 and cysteine 101 are joined by a disulfide. N-linked (GlcNAc...) asparagine glycosylation occurs at asparagine 105. The chain crosses the membrane as a helical span at residues 140-160; it reads IYLITIIFLNFLRGILVFCCL. Topologically, residues 161 to 183 are cytoplasmic; the sequence is RRKPVCFRNLMSTVMEALYSKMG. The chain crosses the membrane as a helical span at residues 184–204; the sequence is VCCLLIWECLLLVLYIAFLPI. Topologically, residues 205–228 are extracellular; the sequence is YVSFRSRAFLLDDTYPLYTNWLWN. Residues 229–249 traverse the membrane as a helical segment; sequence ICIILTVIMVLFPGLILCLLW. Residues 250–319 are Cytoplasmic-facing; it reads TLNCYGQVSS…DDTASTLFIS (70 aa).

This sequence belongs to the SKINT family. As to expression, expressed in skin, thymus and testis.

It is found in the membrane. In terms of biological role, may act by engaging a cell surface molecule on immature T-cells in the embryonic thymus. The chain is Selection and upkeep of intraepithelial T-cells protein 9 (Skint9) from Mus musculus (Mouse).